The following is a 357-amino-acid chain: MDQLFASIHATGQSLLGYYWPLVWNLVKIIAVVAPLMGAVAYLTLWERKVIGWMHVRHGPNRTGPAGLLQPIADGVKLLLKEIVVPAKSSKALFVIAPIMTIMPALAAWAVIPFGPETVLADVNAGLLFVMAITSLEVYGVIVAGWASNSKYAFLGAMRASAQMISYEIAMGFVLVIILMVTGSMNLTTIVNTQNTGRFAEMGLTFLSWNWLPLLPMFFIYIISGTAELNRHPFDVVEGESEIVAGHMVEYSGMSFAMFFLAEYANMWLISIMATLMFLGGWTSPIDMAPFTWVPGWIWLGLKTLMVVTMFIWFRASFPRYRYDQIMRLGWKVFIPLTLVYLLIVAIWMKTPWNIWN.

The next 8 helical transmembrane spans lie at 26 to 46 (LVKI…LTLW), 92 to 112 (ALFV…WAVI), 127 to 147 (LLFV…AGWA), 164 to 184 (MISY…VTGS), 203 to 223 (GLTF…IYII), 259 to 279 (FFLA…LMFL), 294 to 314 (VPGW…FIWF), and 329 to 349 (LGWK…AIWM).

It belongs to the complex I subunit 1 family. As to quaternary structure, NDH-1 is composed of 14 different subunits. Subunits NuoA, H, J, K, L, M, N constitute the membrane sector of the complex.

The protein localises to the cell inner membrane. It catalyses the reaction a quinone + NADH + 5 H(+)(in) = a quinol + NAD(+) + 4 H(+)(out). Functionally, NDH-1 shuttles electrons from NADH, via FMN and iron-sulfur (Fe-S) centers, to quinones in the respiratory chain. The immediate electron acceptor for the enzyme in this species is believed to be ubiquinone. Couples the redox reaction to proton translocation (for every two electrons transferred, four hydrogen ions are translocated across the cytoplasmic membrane), and thus conserves the redox energy in a proton gradient. This subunit may bind ubiquinone. In Janthinobacterium sp. (strain Marseille) (Minibacterium massiliensis), this protein is NADH-quinone oxidoreductase subunit H.